A 441-amino-acid chain; its full sequence is ATP-dependent protease ATPase subunit HslU (441 aa).

ATP contacts are provided by residues I18, G60 to E65, D254, E319, and R391.

It belongs to the ClpX chaperone family. HslU subfamily. As to quaternary structure, a double ring-shaped homohexamer of HslV is capped on each side by a ring-shaped HslU homohexamer. The assembly of the HslU/HslV complex is dependent on binding of ATP.

It localises to the cytoplasm. ATPase subunit of a proteasome-like degradation complex; this subunit has chaperone activity. The binding of ATP and its subsequent hydrolysis by HslU are essential for unfolding of protein substrates subsequently hydrolyzed by HslV. HslU recognizes the N-terminal part of its protein substrates and unfolds these before they are guided to HslV for hydrolysis. The protein is ATP-dependent protease ATPase subunit HslU of Shewanella frigidimarina (strain NCIMB 400).